The chain runs to 583 residues: L-galactono-1,4-lactone dehydrogenase 2, mitochondrial (583 aa).

A mitochondrion-targeting transit peptide spans 1–36; it reads MRRLLLAGILRRASSSPSSHHHLHLVRALSASSPLP. Positions 37–78 are cleaved as a propeptide — removed in mature form; sequence ASDADLRKYAGYALLLLGCGAATYYSFPLPPDALHKKAVPFK. The chain crosses the membrane as a helical span at residues 45–61; that stretch reads YAGYALLLLGCGAATYY. Residues 95–266 enclose the FAD-binding PCMH-type domain; the sequence is THEVHTRVLL…AEVTLQCVER (172 aa).

FAD serves as cofactor.

It is found in the mitochondrion membrane. It carries out the reaction L-galactono-1,4-lactone + 4 Fe(III)-[cytochrome c] = L-dehydroascorbate + 4 Fe(II)-[cytochrome c] + 5 H(+). It functions in the pathway cofactor biosynthesis; L-ascorbate biosynthesis. In terms of biological role, involved in the biosynthesis of ascorbic acid. The polypeptide is L-galactono-1,4-lactone dehydrogenase 2, mitochondrial (GLDH2) (Oryza sativa subsp. japonica (Rice)).